The primary structure comprises 116 residues: NADH-ubiquinone oxidoreductase chain 3 (116 aa).

The next 3 membrane-spanning stretches (helical) occupy residues 3 to 23 (LVTT…TISF), 56 to 76 (FFLI…LLPL), and 84 to 104 (APTL…LGLI).

It belongs to the complex I subunit 3 family.

It localises to the mitochondrion membrane. It carries out the reaction a ubiquinone + NADH + 5 H(+)(in) = a ubiquinol + NAD(+) + 4 H(+)(out). In terms of biological role, core subunit of the mitochondrial membrane respiratory chain NADH dehydrogenase (Complex I) that is believed to belong to the minimal assembly required for catalysis. Complex I functions in the transfer of electrons from NADH to the respiratory chain. The immediate electron acceptor for the enzyme is believed to be ubiquinone. This chain is NADH-ubiquinone oxidoreductase chain 3 (MT-ND3), found in Oncorhynchus nerka (Sockeye salmon).